Here is a 566-residue protein sequence, read N- to C-terminus: Bacillolysin (566 aa).

The N-terminal stretch at 1 to 27 (MKKKSLALVLATGMAVTTFGGTGSAFA) is a signal peptide. Positions 28–249 (DSKNVLSTKK…KQDAKAVVKP (222 aa)) are cleaved as a propeptide — activation peptide. Residues Asp307, Asp309, Val311, and Asp388 each contribute to the Ca(2+) site. His392 is a binding site for Zn(2+). Residue Glu393 is part of the active site. Residues His396 and Glu416 each contribute to the Zn(2+) site. Ca(2+) is bound by residues Glu427, Asn433, Asp435, Glu437, Glu440, Tyr443, Thr444, Lys447, and Asp450. The active-site Proton donor is the His481.

The protein belongs to the peptidase M4 family. Requires Ca(2+) as cofactor. The cofactor is Zn(2+).

It is found in the secreted. The enzyme catalyses Similar, but not identical, to that of thermolysin.. Extracellular zinc metalloprotease. The protein is Bacillolysin (npr) of Bacillus cereus.